The sequence spans 395 residues: Leucine aminopeptidase 1 (395 aa).

The N-terminal stretch at 1-19 is a signal peptide; that stretch reads MKHLSLLALAAVAPTTALA. The propeptide occupies 20-95; the sequence is GVIDHQQVTF…SVKSFEQTKV (76 aa). An N-linked (GlcNAc...) asparagine glycan is attached at asparagine 187. Zn(2+)-binding residues include histidine 195, aspartate 214, glutamate 253, and aspartate 280. Cysteine 329 and cysteine 333 are oxidised to a cystine. Histidine 362 serves as a coordination point for Zn(2+).

It belongs to the peptidase M28 family. M28E subfamily. As to quaternary structure, monomer. It depends on Zn(2+) as a cofactor.

The protein resides in the secreted. Its function is as follows. Extracellular aminopeptidase that allows assimilation of proteinaceous substrates. This chain is Leucine aminopeptidase 1 (LAP1), found in Uncinocarpus reesii (strain UAMH 1704).